The chain runs to 514 residues: Inosine-5'-monophosphate dehydrogenase (514 aa).

CBS domains lie at 112 to 171 (FISK…DTPV) and 175 to 233 (MTRR…PHST). Residues 270-272 (DSS) and 320-322 (GMG) contribute to the NAD(+) site. K(+) contacts are provided by Gly322 and Gly324. Residue Ser325 participates in IMP binding. Cys327 serves as a coordination point for K(+). The active-site Thioimidate intermediate is Cys327. IMP is bound by residues 360–362 (DGG), 383–384 (GG), and 407–411 (YRGMG). Arg425 (proton acceptor) is an active-site residue. Gln437 is an IMP binding site. Residues Glu496, Gly497, and Gly498 each coordinate K(+). Positions 512-514 (AKM) match the Microbody targeting signal motif.

Belongs to the IMPDH/GMPR family. As to quaternary structure, heterotetramer. Interacts with glycosomal protein sorting receptor PEX5. Requires K(+) as cofactor.

The protein resides in the glycosome. The enzyme catalyses IMP + NAD(+) + H2O = XMP + NADH + H(+). It participates in purine metabolism; XMP biosynthesis via de novo pathway; XMP from IMP: step 1/1. With respect to regulation, mycophenolic acid (MPA) is a non-competitive inhibitor that prevents formation of the closed enzyme conformation by binding to the same site as the amobile flap. In contrast, mizoribine monophosphate (MZP) is a competitive inhibitor that induces the closed conformation. MPA is a potent inhibitor of mammalian IMPDHs but a poor inhibitor of the bacterial enzymes. MZP is a more potent inhibitor of bacterial IMPDH. Potently inhibited by MPA. Inhibited by XMP and GMP. Its function is as follows. Catalyzes the conversion of inosine 5'-phosphate (IMP) to xanthosine 5'-phosphate (XMP), the first committed and rate-limiting step in the de novo synthesis of guanine nucleotides, and therefore plays an important role in the regulation of cell growth. The polypeptide is Inosine-5'-monophosphate dehydrogenase (Leishmania donovani).